The primary structure comprises 663 residues: F-box protein DAS1 (663 aa).

The F-box domain maps to 46–91 (VFPLTKLPDELMQEVFSHLPQPDRLQLCLVNKRLNKIATKLLYRRI).

In terms of assembly, interacts with SKP1. Component of the probable SCF(DAS1) complex containing CDC53, SKP1, RBX1 and DAS1.

The protein operates within protein modification; protein ubiquitination. Substrate recognition component of a SCF (SKP1-CUL1-F-box protein) E3 ubiquitin-protein ligase complex which mediates the ubiquitination and subsequent proteasomal degradation of target proteins. Probably recognizes and binds to phosphorylated target proteins. The polypeptide is F-box protein DAS1 (DAS1) (Saccharomyces cerevisiae (strain ATCC 204508 / S288c) (Baker's yeast)).